Here is an 87-residue protein sequence, read N- to C-terminus: MFVVELSLKLSPMPISVQRKSLEAAQGLYGEIRQAMESGHPQLMDLRCEKSEEKQICLRSSEIVSVQLYEKSAMGAGSKRPGFSTGG.

Belongs to the UPF0367 family.

This chain is UPF0367 protein SynRCC307_0258, found in Synechococcus sp. (strain RCC307).